The primary structure comprises 275 residues: MPELPEVETTRRGIEPALVGKRLCGVVVRQPQLRWPIPVKTLEKELVGQVIQQVARRAKYLLWRCPQGTLLVHLGMSGSLRIVPEHTPPAKHDHVDWVMEGGQMVRLHDPRRFGAVVWIPVTSPEEEHPLLAKLGPEPLHRSLNGRYLHQGSRGRQLAVKNYIMDQSVVVGVGNIYASEALFRAGIAPAQAAGKVGLGRYRALACAIKAVLGDSIEQGGTTLRDFIGSDGKPGYFVQSLNVYGRAGKACPKCGTTIEKQVLGQRSSYYCPQCQRA.

The active-site Schiff-base intermediate with DNA is the Pro-2. Glu-3 (proton donor) is an active-site residue. Lys-59 (proton donor; for beta-elimination activity) is an active-site residue. Residues His-92, Arg-111, and Arg-155 each coordinate DNA. The FPG-type zinc-finger motif lies at 240-274 (NVYGRAGKACPKCGTTIEKQVLGQRSSYYCPQCQR). Arg-264 acts as the Proton donor; for delta-elimination activity in catalysis.

The protein belongs to the FPG family. Monomer. Zn(2+) serves as cofactor.

It carries out the reaction Hydrolysis of DNA containing ring-opened 7-methylguanine residues, releasing 2,6-diamino-4-hydroxy-5-(N-methyl)formamidopyrimidine.. The catalysed reaction is 2'-deoxyribonucleotide-(2'-deoxyribose 5'-phosphate)-2'-deoxyribonucleotide-DNA = a 3'-end 2'-deoxyribonucleotide-(2,3-dehydro-2,3-deoxyribose 5'-phosphate)-DNA + a 5'-end 5'-phospho-2'-deoxyribonucleoside-DNA + H(+). In terms of biological role, involved in base excision repair of DNA damaged by oxidation or by mutagenic agents. Acts as a DNA glycosylase that recognizes and removes damaged bases. Has a preference for oxidized purines, such as 7,8-dihydro-8-oxoguanine (8-oxoG). Has AP (apurinic/apyrimidinic) lyase activity and introduces nicks in the DNA strand. Cleaves the DNA backbone by beta-delta elimination to generate a single-strand break at the site of the removed base with both 3'- and 5'-phosphates. This is Formamidopyrimidine-DNA glycosylase from Magnetococcus marinus (strain ATCC BAA-1437 / JCM 17883 / MC-1).